Here is a 163-residue protein sequence, read N- to C-terminus: UPF0523 protein B (163 aa).

The protein belongs to the UPF0523 family.

In Dictyostelium discoideum (Social amoeba), this protein is UPF0523 protein B.